The primary structure comprises 390 residues: 2-oxoisovalerate dehydrogenase subunit beta, mitochondrial (390 aa).

The N-terminal 48 residues, 1-48 (MAAVAARAGGLLRLGAAGAERRRRGLRCAALVQGFLQPAVDDASQKRR), are a transit peptide targeting the mitochondrion. Tyr-150 serves as a coordination point for thiamine diphosphate. The K(+) site is built by Gly-176, Leu-178, Thr-179, Cys-226, and Asp-229. Position 230 is an N6-acetyllysine (Lys-230). Residue Asn-231 participates in K(+) binding. Residue Lys-239 is modified to N6-acetyllysine.

As to quaternary structure, heterotetramer of 2 alpha/BCKDHA and 2 beta chains/BCKDHB that forms the branched-chain alpha-keto acid decarboxylase (E1) component of the BCKD complex. The branched-chain alpha-ketoacid dehydrogenase is a large complex composed of three major building blocks E1, E2 and E3. It is organized around E2, a 24-meric cubic core composed of DBT, to which are associated 6 to 12 copies of E1, and approximately 6 copies of the dehydrogenase E3, a DLD dimer. It depends on thiamine diphosphate as a cofactor.

It is found in the mitochondrion matrix. The enzyme catalyses N(6)-[(R)-lipoyl]-L-lysyl-[protein] + 3-methyl-2-oxobutanoate + H(+) = N(6)-[(R)-S(8)-2-methylpropanoyldihydrolipoyl]-L-lysyl-[protein] + CO2. In terms of biological role, together with BCKDHA forms the heterotetrameric E1 subunit of the mitochondrial branched-chain alpha-ketoacid dehydrogenase (BCKD) complex. The BCKD complex catalyzes the multi-step oxidative decarboxylation of alpha-ketoacids derived from the branched-chain amino-acids valine, leucine and isoleucine producing CO2 and acyl-CoA which is subsequently utilized to produce energy. The E1 subunit catalyzes the first step with the decarboxylation of the alpha-ketoacid forming an enzyme-product intermediate. A reductive acylation mediated by the lipoylamide cofactor of E2 extracts the acyl group from the E1 active site for the next step of the reaction. This Rattus norvegicus (Rat) protein is 2-oxoisovalerate dehydrogenase subunit beta, mitochondrial.